The sequence spans 194 residues: Thymidylate kinase (194 aa).

7-14 (GIDTAGKS) lines the ATP pocket.

It belongs to the thymidylate kinase family.

The enzyme catalyses dTMP + ATP = dTDP + ADP. Functionally, phosphorylation of dTMP to form dTDP in both de novo and salvage pathways of dTTP synthesis. This is Thymidylate kinase from Nautilia profundicola (strain ATCC BAA-1463 / DSM 18972 / AmH).